Here is a 334-residue protein sequence, read N- to C-terminus: MIPNPTRDAPNIPSFVAADVGGTHVRVSVVAAAPTCASPPQLLDVRTYRCADYPSLSTILNDFLGTRSAVRDCVIASAGFQRSDGTVITTNLPWPLSPHRLRADLDLAEVSLVNDFEALAYATEDMEAAQLLHLTGPAKAQDGPRLLLGPGTGLGAALWIPNNGRPIVLPTEAGQAALPSTTELEMQLVRHMLNNRTHVPIEHALSGPGILNVYRALCALQSVLPQHASPDAISHAAAAGTDMLSSQTLEVFCDFLGSIVGDLVMMYGAQGGVYLAGGILPQLREPLLRSHFVERFLNKGPMGEALQHVPVRLIEHGQLGIVGAARWYLNKKAT.

18–23 lines the ATP pocket; sequence ADVGGT.

Belongs to the bacterial glucokinase family.

The polypeptide is Glucokinase-like protein XF_1460 (Xylella fastidiosa (strain 9a5c)).